The primary structure comprises 255 residues: 1-(5-phosphoribosyl)-5-[(5-phosphoribosylamino)methylideneamino] imidazole-4-carboxamide isomerase (255 aa).

Asp-8 serves as the catalytic Proton acceptor. Asp-129 functions as the Proton donor in the catalytic mechanism.

Belongs to the HisA/HisF family.

It localises to the cytoplasm. It carries out the reaction 1-(5-phospho-beta-D-ribosyl)-5-[(5-phospho-beta-D-ribosylamino)methylideneamino]imidazole-4-carboxamide = 5-[(5-phospho-1-deoxy-D-ribulos-1-ylimino)methylamino]-1-(5-phospho-beta-D-ribosyl)imidazole-4-carboxamide. It participates in amino-acid biosynthesis; L-histidine biosynthesis; L-histidine from 5-phospho-alpha-D-ribose 1-diphosphate: step 4/9. The polypeptide is 1-(5-phosphoribosyl)-5-[(5-phosphoribosylamino)methylideneamino] imidazole-4-carboxamide isomerase (Prochlorococcus marinus (strain MIT 9515)).